The primary structure comprises 209 residues: Response regulator protein VraR (209 aa).

The Response regulatory domain occupies 4-120; that stretch reads KVLFVDDHEM…DIADAVRKTS (117 aa). Asp55 carries the post-translational modification 4-aspartylphosphate. The region spanning 141–206 is the HTH luxR-type domain; sequence RAELYEMLTE…QAVIYAFQHN (66 aa). The H-T-H motif DNA-binding region spans 165–184; it reads NQEIASASHITIKTVKTHVS.

As to quaternary structure, homodimer. Post-translationally, phosphorylated by VraS. Phosphorylation state of VraR controls dimerization of the protein.

Member of the two-component regulatory system VraS/VraR involved in the control of the cell wall peptidoglycan biosynthesis. Upon cellular stress, the histidine kinase VraS transfers the phosphoryl group onto VraR. Upon phosphorylation, VraR dimerizes at the N-terminal domain. In turn, phosphorylation-induced dimerization expand and enhance the VraR binding to its own promoter leading to increased expression and subsequent modulation of as many as 40 genes, which ultimately constitute the S.aureus response to cell wall damage. In addition, inhibits the host autophagic flux and delays the early stage of autophagosome formation, thereby promoting bacterial survival. Facilitates the ability of S.aureus to resist host polymorphonuclear leukocytes-mediated phagocytosis and killing thus contributing to immune evasion. This chain is Response regulator protein VraR (vraR), found in Staphylococcus aureus (strain NCTC 8325 / PS 47).